A 445-amino-acid chain; its full sequence is Exodeoxyribonuclease 7 large subunit (445 aa).

The protein belongs to the XseA family. Heterooligomer composed of large and small subunits.

It is found in the cytoplasm. The catalysed reaction is Exonucleolytic cleavage in either 5'- to 3'- or 3'- to 5'-direction to yield nucleoside 5'-phosphates.. In terms of biological role, bidirectionally degrades single-stranded DNA into large acid-insoluble oligonucleotides, which are then degraded further into small acid-soluble oligonucleotides. This chain is Exodeoxyribonuclease 7 large subunit, found in Nautilia profundicola (strain ATCC BAA-1463 / DSM 18972 / AmH).